The following is a 496-amino-acid chain: Glycogen synthase (496 aa).

ADP-alpha-D-glucose is bound at residue lysine 24.

This sequence belongs to the glycosyltransferase 1 family. Bacterial/plant glycogen synthase subfamily.

The enzyme catalyses [(1-&gt;4)-alpha-D-glucosyl](n) + ADP-alpha-D-glucose = [(1-&gt;4)-alpha-D-glucosyl](n+1) + ADP + H(+). It functions in the pathway glycan biosynthesis; glycogen biosynthesis. Functionally, synthesizes alpha-1,4-glucan chains using ADP-glucose. The sequence is that of Glycogen synthase from Nitrosospira multiformis (strain ATCC 25196 / NCIMB 11849 / C 71).